The chain runs to 200 residues: dTTP/UTP pyrophosphatase (200 aa).

Residue Asp81 is the Proton acceptor of the active site.

This sequence belongs to the Maf family. YhdE subfamily. The cofactor is a divalent metal cation.

The protein localises to the cytoplasm. The enzyme catalyses dTTP + H2O = dTMP + diphosphate + H(+). The catalysed reaction is UTP + H2O = UMP + diphosphate + H(+). In terms of biological role, nucleoside triphosphate pyrophosphatase that hydrolyzes dTTP and UTP. May have a dual role in cell division arrest and in preventing the incorporation of modified nucleotides into cellular nucleic acids. This Albidiferax ferrireducens (strain ATCC BAA-621 / DSM 15236 / T118) (Rhodoferax ferrireducens) protein is dTTP/UTP pyrophosphatase.